Here is a 492-residue protein sequence, read N- to C-terminus: KRAB-A domain-containing protein 2 (492 aa).

The KRAB domain maps to 36–117; that stretch reads LFQEATAFEN…MREKFLMSVT (82 aa). A Phosphoserine modification is found at Ser-115. Thr-117 carries the phosphothreonine modification. Residues 247–415 form the Integrase catalytic domain; the sequence is RGLAPKPMTF…SPFEAMFGYK (169 aa). Residues 427-457 are a coiled coil; that stretch reads RETVATLQTEEELEIAEEQLENSLWIRQEER. The span at 455–465 shows a compositional bias: basic and acidic residues; that stretch reads EERAEIGADRS. Residues 455–492 are disordered; sequence EERAEIGADRSDMDDDMDPTPEASEPSTSQGTSGLLCW. A compositionally biased stretch (polar residues) spans 479 to 492; that stretch reads EPSTSQGTSGLLCW.

The sequence is that of KRAB-A domain-containing protein 2 (KRBA2) from Homo sapiens (Human).